Reading from the N-terminus, the 33-residue chain is uncharacterized protein (33 aa).

The protein resides in the cytoplasm. The protein localises to the nucleus. This is an uncharacterized protein from Schizosaccharomyces pombe (strain 972 / ATCC 24843) (Fission yeast).